Consider the following 725-residue polypeptide: Probable dipeptidyl-peptidase 5 (725 aa).

The N-terminal stretch at 1-18 is a signal peptide; sequence MGALRWLSIAATASTALA. N-linked (GlcNAc...) asparagine glycans are attached at residues N75, N96, N153, N258, N383, and N453. Residue S563 is the Charge relay system of the active site. The N-linked (GlcNAc...) asparagine glycan is linked to N610. Residues D646 and H678 each act as charge relay system in the active site.

It belongs to the peptidase S9C family.

It localises to the secreted. Functionally, extracellular dipeptidyl-peptidase which removes N-terminal dipeptides sequentially from polypeptides having unsubstituted N-termini. The polypeptide is Probable dipeptidyl-peptidase 5 (dpp5) (Aspergillus flavus (strain ATCC 200026 / FGSC A1120 / IAM 13836 / NRRL 3357 / JCM 12722 / SRRC 167)).